The following is a 424-amino-acid chain: Protein FAM43A (424 aa).

The span at 261 to 297 (QQEEELQEEEEEHLEDCLEEEEEEDGVGDGDPAEEEA) shows a compositional bias: acidic residues. Disordered stretches follow at residues 261–299 (QQEEELQEEEEEHLEDCLEEEEEEDGVGDGDPAEEEAEA) and 382–424 (LLSG…PYSG). A compositionally biased stretch (low complexity) spans 382-394 (LLSGESTGSESSI). A compositionally biased stretch (polar residues) spans 405–418 (SPGNPSGPADSTSL).

This sequence belongs to the FAM43 family.

This chain is Protein FAM43A (Fam43a), found in Mus musculus (Mouse).